The primary structure comprises 491 residues: Glucose-6-phosphate 1-dehydrogenase (491 aa).

NADP(+) is bound by residues arginine 49, 91–92 (DV), and lysine 146. 4 residues coordinate substrate: histidine 176, lysine 180, glutamate 214, and aspartate 233. Histidine 238 (proton acceptor) is an active-site residue. Substrate-binding residues include lysine 338 and lysine 343.

Belongs to the glucose-6-phosphate dehydrogenase family.

It carries out the reaction D-glucose 6-phosphate + NADP(+) = 6-phospho-D-glucono-1,5-lactone + NADPH + H(+). It participates in carbohydrate degradation; pentose phosphate pathway; D-ribulose 5-phosphate from D-glucose 6-phosphate (oxidative stage): step 1/3. In terms of biological role, catalyzes the oxidation of glucose 6-phosphate to 6-phosphogluconolactone. This Buchnera aphidicola subsp. Acyrthosiphon pisum (strain APS) (Acyrthosiphon pisum symbiotic bacterium) protein is Glucose-6-phosphate 1-dehydrogenase.